Consider the following 933-residue polypeptide: Myocardin (933 aa).

Positions 12-27 (IRSKFRSVLQLRLQQR) match the MEF2C-binding motif. 3 RPEL repeats span residues 18–43 (SVLQLRLQQRRTQEQLANEGIIPPLR), 62–87 (DTLKHKVRNRSDRGNVVKMHILQASS), and 106–131 (DDLNEKIALRPGPLELVEKNILPVDC). Residues 153–205 (FEEDSSSDGLSPDQTRSEDLPGSAGSPLDTKAAETPLAGPRGTVQDLTLGSEN) are HDAC5-binding. 2 disordered regions span residues 154–282 (EEDS…PPPM) and 324–365 (NEQM…GPLP). A compositionally biased stretch (polar residues) spans 210 to 220 (SAPQSGNQSDL). Residues 248–265 (NRHKKPKDPKPKVKKLKY) are compositionally biased toward basic residues. Over residues 330 to 346 (NPNSSSAPLSSTPLSPA) the composition is skewed to low complexity. A compositionally biased stretch (polar residues) spans 347–357 (KNSFSGQTGVS). The region spanning 368–402 (LDDLKVSELRQQLRIRGLPVSGTKTALMDRLRPFQ) is the SAP domain. 4 positions are modified to phosphoserine; by GSK3-beta: serine 445, serine 449, serine 453, and serine 457. The stretch at 515–550 (LVEKQKVINELTWKLQQEQRQVEELRMQLQKQKRGT) forms a coiled coil. Residues 568 to 613 (DAGSSCPFAPLPRAVKRQSNSSEEQPAAGDAARLRPLGNTHCAESS) are disordered. Phosphoserine; by GSK3-beta occurs at positions 621, 625, 629, and 633. 2 disordered regions span residues 630–672 (PQHS…VSSP) and 760–794 (PKIPGSSRSPTAALPKPSATFDQASSGGQLAFDHY). Residues 712-933 (ITQPPSYEDA…SPMDLHLQQW (222 aa)) are required for interaction with and ubiquitination by STUB1. Residues serine 810, serine 857, and serine 864 each carry the phosphoserine; by MAPK1 and MAPK3 modification. Threonine 891 carries the phosphothreonine; by MAPK1 and MAPK3 modification.

In terms of assembly, homodimer. Interacts with MLLT7/FOXO4. Interacts with SRF, its association does not depend on specific DNA sequences for ternary complex formation. Interacts (via C-terminal) with EP300 (via the CREB-binding domain). Interacts with HDAC4 and HDAC5. Interacts with MEF2C. Interacts (via C-terminus) with STUB1/CHIP. Interacts with PURB. Ubiquitinated; by STUB1/CHIP at the C-terminus, leading to its degradation by the proteasome. Phosphorylation by GSK3B is required for STUB1/CHIP-mediated ubiquitination. Post-translationally, phosphorylation negatively regulates the intrinsic myocardin transcriptional activity. Phosphorylated; by GSK3B. Expressed in the heart and in smooth muscle cells-containing tissues (aorta, pulmonary vein, lung), but is not detectable in skeletal muscle, liver, kidney and spleen.

The protein resides in the nucleus. Its function is as follows. Smooth muscle cells (SM) and cardiac muscle cells-specific transcriptional factor which uses the canonical single or multiple CArG boxes DNA sequence. Acts as a cofactor of serum response factor (SRF) with the potential to modulate SRF-target genes. Plays a crucial role in cardiogenesis, urinary bladder development, and differentiation of the smooth muscle cell lineage (myogenesis). Positively regulates the transcription of genes involved in vascular smooth muscle contraction. This is Myocardin (MYOCD) from Sus scrofa (Pig).